Reading from the N-terminus, the 328-residue chain is Tetraacyldisaccharide 4'-kinase (328 aa).

55–62 (TAGGNGKT) serves as a coordination point for ATP.

The protein belongs to the LpxK family.

The catalysed reaction is a lipid A disaccharide + ATP = a lipid IVA + ADP + H(+). It functions in the pathway glycolipid biosynthesis; lipid IV(A) biosynthesis; lipid IV(A) from (3R)-3-hydroxytetradecanoyl-[acyl-carrier-protein] and UDP-N-acetyl-alpha-D-glucosamine: step 6/6. Functionally, transfers the gamma-phosphate of ATP to the 4'-position of a tetraacyldisaccharide 1-phosphate intermediate (termed DS-1-P) to form tetraacyldisaccharide 1,4'-bis-phosphate (lipid IVA). The sequence is that of Tetraacyldisaccharide 4'-kinase from Yersinia pseudotuberculosis serotype I (strain IP32953).